We begin with the raw amino-acid sequence, 670 residues long: Catalase (670 aa).

Catalysis depends on residues histidine 61 and asparagine 132. Heme is bound at residue tyrosine 345.

It belongs to the catalase family. As to quaternary structure, homotetramer. Heme serves as cofactor.

Its subcellular location is the peroxisome matrix. It carries out the reaction 2 H2O2 = O2 + 2 H2O. In terms of biological role, catalyzes the degradation of hydrogen peroxide (H(2)O(2)) generated by peroxisomal oxidases to water and oxygen, thereby protecting cells from the toxic effects of hydrogen peroxide. The sequence is that of Catalase from Penicillium janthinellum (Penicillium vitale).